A 480-amino-acid polypeptide reads, in one-letter code: NADH-quinone oxidoreductase subunit N (480 aa).

The next 14 membrane-spanning stretches (helical) occupy residues leucine 12–phenylalanine 32, leucine 41–valine 61, phenylalanine 80–leucine 100, leucine 105–valine 125, leucine 130–phenylalanine 150, phenylalanine 165–phenylalanine 185, isoleucine 204–alanine 224, alanine 237–leucine 257, valine 275–glutamine 295, leucine 300–serine 320, alanine 326–leucine 346, glycine 372–phenylalanine 392, leucine 406–valine 428, and isoleucine 450–phenylalanine 470.

Belongs to the complex I subunit 2 family. As to quaternary structure, NDH-1 is composed of 14 different subunits. Subunits NuoA, H, J, K, L, M, N constitute the membrane sector of the complex.

The protein localises to the cell inner membrane. The enzyme catalyses a quinone + NADH + 5 H(+)(in) = a quinol + NAD(+) + 4 H(+)(out). Its function is as follows. NDH-1 shuttles electrons from NADH, via FMN and iron-sulfur (Fe-S) centers, to quinones in the respiratory chain. The immediate electron acceptor for the enzyme in this species is believed to be ubiquinone. Couples the redox reaction to proton translocation (for every two electrons transferred, four hydrogen ions are translocated across the cytoplasmic membrane), and thus conserves the redox energy in a proton gradient. The chain is NADH-quinone oxidoreductase subunit N from Maricaulis maris (strain MCS10) (Caulobacter maris).